Here is a 920-residue protein sequence, read N- to C-terminus: Glutamate receptor 2.2 (920 aa).

The first 24 residues, 1 to 24, serve as a signal peptide directing secretion; it reads MKNSKLFFRFLFLFFFFCLESSRG. The Extracellular segment spans residues 25–580; sequence QDNGKTQVNI…DKFSFLKPLS (556 aa). N-linked (GlcNAc...) asparagine glycosylation is found at asparagine 53, asparagine 204, asparagine 267, asparagine 331, asparagine 342, asparagine 477, and asparagine 542. Residues 581–601 traverse the membrane as a helical segment; that stretch reads IELWLTTLVFFFLVGISVWTL. Over 602–610 the chain is Cytoplasmic; that stretch reads EHRVNSDFR. Residues 611-631 form a helical membrane-spanning segment; that stretch reads GPANYQASTIFWFAFSTMVFA. Residues 632–635 lie on the Cytoplasmic side of the membrane; sequence PRER. Residues 636 to 656 traverse the membrane as a helical segment; sequence VLSFGARSLVVTWYFVLLVLT. Residues 657–830 lie on the Extracellular side of the membrane; the sequence is QSYTASLASL…VTAIQLGVGS (174 aa). N-linked (GlcNAc...) asparagine glycosylation is present at asparagine 702. The helical transmembrane segment at 831-851 threads the bilayer; it reads FWFLFLVVFVVCVLALGKFTF. Residues 852–920 are Cytoplasmic-facing; the sequence is CFLWKTKGKD…QVNQTDPDCL (69 aa).

The protein belongs to the glutamate-gated ion channel (TC 1.A.10.1) family. May form heteromers. Expressed predominantly in roots.

Its subcellular location is the membrane. Glutamate-gated receptor that probably acts as a non-selective cation channel. May be involved in light-signal transduction and calcium homeostasis via the regulation of calcium influx into cells. The polypeptide is Glutamate receptor 2.2 (GLR2.2) (Arabidopsis thaliana (Mouse-ear cress)).